The following is a 122-amino-acid chain: UPF0102 protein Gmet_2864 (122 aa).

Belongs to the UPF0102 family.

The polypeptide is UPF0102 protein Gmet_2864 (Geobacter metallireducens (strain ATCC 53774 / DSM 7210 / GS-15)).